The chain runs to 202 residues: Protein N-terminal glutamine amidohydrolase (202 aa).

Catalysis depends on residues cysteine 27, histidine 80, and aspartate 96.

This sequence belongs to the NTAQ1 family. In terms of assembly, monomer.

It localises to the cytoplasm. Its subcellular location is the cytosol. The protein resides in the nucleus. The enzyme catalyses N-terminal L-glutaminyl-[protein] + H2O = N-terminal L-glutamyl-[protein] + NH4(+). Mediates the side-chain deamidation of N-terminal glutamine residues to glutamate, an important step in N-end rule pathway of protein degradation. Conversion of the resulting N-terminal glutamine to glutamate renders the protein susceptible to arginylation, polyubiquitination and degradation as specified by the N-end rule. Does not act on substrates with internal or C-terminal glutamine and does not act on non-glutamine residues in any position. Does not deaminate acetylated N-terminal glutamine. With the exception of proline, all tested second-position residues on substrate peptides do not greatly influence the activity. In contrast, a proline at position 2, virtually abolishes deamidation of N-terminal glutamine. The sequence is that of Protein N-terminal glutamine amidohydrolase (ntaq1) from Danio rerio (Zebrafish).